A 588-amino-acid polypeptide reads, in one-letter code: Disabled homolog 1 (588 aa).

The disordered stretch occupies residues 1–26; that stretch reads MSTETELQVAVKTSAKKDSRKKGQDR. The span at 15–26 shows a compositional bias: basic and acidic residues; sequence AKKDSRKKGQDR. The 154-residue stretch at 36–189 folds into the PID domain; sequence KGEGVRYKAK…CEQAVYQTIL (154 aa). Phosphotyrosine is present on residues Y198, Y220, and Y232. Disordered stretches follow at residues 224-243, 420-444, 451-470, and 502-588; these read TSQKKEGVYDVPKSQPNSQP, LATVPGTNDSARSSPQSDKPRQKMG, FQMVQPPPVPSRKPDQPSLT, and LTPV…QDGS. A compositionally biased stretch (polar residues) spans 424 to 436; it reads PGTNDSARSSPQS. Low complexity-rich tracts occupy residues 503-512 and 523-534; these read TPVTSTTPST and SSPSKSSASHVS. At S524 the chain carries Phosphoserine; by CDK5. Over residues 537–546 the composition is skewed to acidic residues; that stretch reads TADDIFEEGF.

Associates with the SH2 domains of SRC, FYN and ABL. Interacts (phosphorylated on tyrosine residues) with CRK and CRKL (via respective SH2 domain). Interacts with SIAH1, LRP8 and VLDLR. Interacts with LRP1. Interacts with APLP1 (via NPXY motif). Interacts with DAB2IP. Interacts with ZSWIM8. Phosphorylated by FYN on Tyr-198 and Tyr-220 upon reelin induction in embryonic neurons. Also found phosphorylated on Tyr-232 upon reelin induction. Also phosphorylated on Ser-524 independently of reelin signaling. Post-translationally, ubiquitinated by various cullin-5-RING E3 ubiquitin-protein ligase complexes (ECS complexes) following ligand-binding and phosphorylation, leading to its degradation. Ubiquitinated by the ECS(SOCS7) complex in the cortical plate of the developing cerebral cortex following ligand-binding and phosphorylation by FYN, leading to its degradation by the proteasome. Recognized by ZSWIM8 through a disorder targets misorder mechanism that eliminates misfolded DAB1 via ubiquitination and proteasomal degradation. In terms of tissue distribution, expressed mainly in brain. Specifically expressin in cortical neurons.

It is found in the cytoplasm. Signaling adapter of the reelin-mediated signaling pathway, which regulates the migration and differentiation of postmitotic neurons during brain development. Mediates intracellular transduction of Reelin signaling following reelin (RELN)-binding to its receptor: acts by docking proteins through its phosphotyrosine residues and PID domain. In Mus musculus (Mouse), this protein is Disabled homolog 1.